Consider the following 476-residue polypeptide: Protein DETOXIFICATION 17 (476 aa).

12 consecutive transmembrane segments (helical) span residues 29–51 (LWLSAPLIGVSLLQYSLQVISVM), 70–90 (FASVTGFTFLLGTASALETLC), 111–131 (FVLLILSVPLSIIWANTEQIL), 140–160 (IASVAGSYAKYMIPSLFAYGL), 177–197 (VFVCSGITTCLHLLLCWLFVL), 205–225 (GAALAISVSYWFNVILLSCYV), 252–272 (IAFPSAVMVCLELWSFELLVL), 286–306 (VLSICLNTSLTIWQISVGLGG), 326–346 (LAVYVIVGIAVAEGIVVVTVL), 363–383 (IIAYAASMIPIVACGNFLDGL), 405–425 (LGSYYLVGVPLGLLLGFHFHI), and 431–451 (WLGIVTALSVQVLCLSLVTIF).

The protein belongs to the multi antimicrobial extrusion (MATE) (TC 2.A.66.1) family.

The protein localises to the membrane. The polypeptide is Protein DETOXIFICATION 17 (Arabidopsis thaliana (Mouse-ear cress)).